A 455-amino-acid polypeptide reads, in one-letter code: Membrane protein Pbs54 (455 aa).

The chain crosses the membrane as a helical span at residues 12–32 (IISIIILILRISLFSCAEHLF). N-linked (GlcNAc...) asparagine glycosylation is found at N41, N102, and N125. 6 helical membrane-spanning segments follow: residues 181–201 (IFLIFLISYMYWFCIKILFNG), 220–240 (FIFFVILKISLIFLPAILSCI), 244–264 (ILTFYFYSISMSPCKDIFYLF), 285–305 (ILIGNVIYNFLCPPKIIIIFI), 312–332 (FLVKIICLTIILFISFLIFFL), and 346–366 (FVFSFTSSYLIVSCFAYFWNI). N373 is a glycosylation site (N-linked (GlcNAc...) asparagine). Residues 398-418 (NMFALFMIFAMSILSIIFPRI) traverse the membrane as a helical segment.

It localises to the cell projection. The protein resides in the cilium. The protein localises to the flagellum. It is found in the cell membrane. Functionally, plays a role in gamete fertilization. Required for the successful transmission of parasites to mosquito. This chain is Membrane protein Pbs54, found in Plasmodium berghei (strain Anka).